The following is a 384-amino-acid chain: Putative glycosyltransferase EpsF (384 aa).

The protein belongs to the glycosyltransferase group 1 family. Glycosyltransferase 4 subfamily.

Its function is as follows. May be involved in the production of the exopolysaccharide (EPS) component of the extracellular matrix during biofilm formation. EPS is responsible for the adhesion of chains of cells into bundles. Required for biofilm maintenance. The sequence is that of Putative glycosyltransferase EpsF (epsF) from Bacillus subtilis (strain 168).